Reading from the N-terminus, the 346-residue chain is Uroporphyrinogen decarboxylase (346 aa).

Residues 23 to 27, Asp-73, Tyr-151, Ser-206, and His-321 each bind substrate; that span reads RQAGR.

This sequence belongs to the uroporphyrinogen decarboxylase family. As to quaternary structure, homodimer.

It localises to the cytoplasm. It catalyses the reaction uroporphyrinogen III + 4 H(+) = coproporphyrinogen III + 4 CO2. It functions in the pathway porphyrin-containing compound metabolism; protoporphyrin-IX biosynthesis; coproporphyrinogen-III from 5-aminolevulinate: step 4/4. Functionally, catalyzes the decarboxylation of four acetate groups of uroporphyrinogen-III to yield coproporphyrinogen-III. This chain is Uroporphyrinogen decarboxylase, found in Aliarcobacter butzleri (strain RM4018) (Arcobacter butzleri).